Reading from the N-terminus, the 206-residue chain is LOB domain-containing protein 35 (206 aa).

The region spanning 4–105 (TCCSACKVMK…EQINSAKNEL (102 aa)) is the LOB domain. The disordered stretch occupies residues 184–206 (ASTSGGTSATQKTLPFPQNHNQP).

This sequence belongs to the LOB domain-containing protein family.

The polypeptide is LOB domain-containing protein 35 (LBD35) (Arabidopsis thaliana (Mouse-ear cress)).